The following is a 536-amino-acid chain: ADP,ATP carrier protein 4 (536 aa).

The next 9 helical transmembrane spans lie at 44–64, 77–97, 109–129, 172–194, 205–225, 244–264, 309–329, 349–369, and 378–398; these read VLLFSLLFALLSYIDAFLYVL, SILFIKSVLVLPMTFFFIVIV, MLEVILIISSVFFLLFGFVIW, TMLYLVAELWGSLIISFMFFSRA, KFLPTISLISAVVFLSSGLLT, FSQVFIVTSALTVMSAITSFF, VVAASVCSNIFEAIYRGGIVL, AQIITSIFLLVMFFKPATHLI, and AITAPIVAIITLVLFFPMVFF. N-linked (GlcNAc...) asparagine glycans are attached at residues Asn-400 and Asn-421. 2 helical membrane-spanning segments follow: residues 465–485 and 493–513; these read LGINIGKTIGSVYCTLVTVVF and VVSVSTVFVGVFCVIWIRSIL.

This sequence belongs to the ADP/ATP translocase tlc family.

It localises to the cell membrane. Functionally, ATP transporter involved in the uptake of ATP from the host cell cytoplasm. Provides the microsporidian cell with host ATP in exchange for ADP. This is an obligate exchange system. This energy acquiring activity is an important component of microsporidian parasitism. This Encephalitozoon cuniculi (strain GB-M1) (Microsporidian parasite) protein is ADP,ATP carrier protein 4 (NTT4).